Reading from the N-terminus, the 107-residue chain is Flagellar transcriptional regulator FlhD (107 aa).

The protein belongs to the FlhD family. As to quaternary structure, homodimer; disulfide-linked. Forms a heterohexamer composed of two FlhC and four FlhD subunits. Each FlhC binds a FlhD dimer, forming a heterotrimer, and a hexamer assembles by dimerization of two heterotrimers.

It is found in the cytoplasm. Functionally, functions in complex with FlhC as a master transcriptional regulator that regulates transcription of several flagellar and non-flagellar operons by binding to their promoter region. Activates expression of class 2 flagellar genes, including fliA, which is a flagellum-specific sigma factor that turns on the class 3 genes. Also regulates genes whose products function in a variety of physiological pathways. This chain is Flagellar transcriptional regulator FlhD, found in Bordetella bronchiseptica (strain ATCC BAA-588 / NCTC 13252 / RB50) (Alcaligenes bronchisepticus).